The chain runs to 216 residues: Protein-L-isoaspartate O-methyltransferase (216 aa).

Residue Ser60 is part of the active site.

The protein belongs to the methyltransferase superfamily. L-isoaspartyl/D-aspartyl protein methyltransferase family.

The protein resides in the cytoplasm. It catalyses the reaction [protein]-L-isoaspartate + S-adenosyl-L-methionine = [protein]-L-isoaspartate alpha-methyl ester + S-adenosyl-L-homocysteine. In terms of biological role, catalyzes the methyl esterification of L-isoaspartyl residues in peptides and proteins that result from spontaneous decomposition of normal L-aspartyl and L-asparaginyl residues. It plays a role in the repair and/or degradation of damaged proteins. This Methanococcus aeolicus (strain ATCC BAA-1280 / DSM 17508 / OCM 812 / Nankai-3) protein is Protein-L-isoaspartate O-methyltransferase.